The sequence spans 328 residues: Carbonic anhydrase-related protein 10 (328 aa).

One can recognise an Alpha-carbonic anhydrase domain in the interval 31–301 (GWWAYKEVVQ…LNNRCIRTNI (271 aa)).

The protein belongs to the alpha-carbonic anhydrase family.

Does not have a catalytic activity. This Bos taurus (Bovine) protein is Carbonic anhydrase-related protein 10 (CA10).